The sequence spans 278 residues: S-adenosylmethionine decarboxylase proenzyme (278 aa).

Residues 96 to 115 (LTPESLTGESPGPLPGNKPS) are disordered. Residue serine 126 is the Schiff-base intermediate with substrate; via pyruvic acid of the active site. Residue serine 126 is modified to Pyruvic acid (Ser); by autocatalysis. Histidine 131 (proton acceptor; for processing activity) is an active-site residue. Residue cysteine 154 is the Proton donor; for catalytic activity of the active site.

It belongs to the prokaryotic AdoMetDC family. Type 2 subfamily. As to quaternary structure, heterooctamer of four alpha and four beta chains arranged as a tetramer of alpha/beta heterodimers. Pyruvate serves as cofactor. In terms of processing, is synthesized initially as an inactive proenzyme. Formation of the active enzyme involves a self-maturation process in which the active site pyruvoyl group is generated from an internal serine residue via an autocatalytic post-translational modification. Two non-identical subunits are generated from the proenzyme in this reaction, and the pyruvate is formed at the N-terminus of the alpha chain, which is derived from the carboxyl end of the proenzyme. The post-translation cleavage follows an unusual pathway, termed non-hydrolytic serinolysis, in which the side chain hydroxyl group of the serine supplies its oxygen atom to form the C-terminus of the beta chain, while the remainder of the serine residue undergoes an oxidative deamination to produce ammonia and the pyruvoyl group blocking the N-terminus of the alpha chain.

It catalyses the reaction S-adenosyl-L-methionine + H(+) = S-adenosyl 3-(methylsulfanyl)propylamine + CO2. Its pathway is amine and polyamine biosynthesis; S-adenosylmethioninamine biosynthesis; S-adenosylmethioninamine from S-adenosyl-L-methionine: step 1/1. Catalyzes the decarboxylation of S-adenosylmethionine to S-adenosylmethioninamine (dcAdoMet), the propylamine donor required for the synthesis of the polyamines spermine and spermidine from the diamine putrescine. The sequence is that of S-adenosylmethionine decarboxylase proenzyme from Alkaliphilus metalliredigens (strain QYMF).